Consider the following 385-residue polypeptide: Zinc finger protein B385R (385 aa).

2 C2H2-type zinc fingers span residues 166–190 (LQCP…FYNH) and 168–190 (CPNC…FYNH).

This sequence belongs to the asfivirus B385R family.

The chain is Zinc finger protein B385R from African swine fever virus (isolate Tick/South Africa/Pretoriuskop Pr4/1996) (ASFV).